The chain runs to 228 residues: Phosphatidylserine decarboxylase proenzyme (228 aa).

Residue S197 is the Schiff-base intermediate with substrate; via pyruvic acid of the active site. Pyruvic acid (Ser); by autocatalysis is present on S197.

It belongs to the phosphatidylserine decarboxylase family. PSD-A subfamily. In terms of assembly, heterodimer of a large membrane-associated beta subunit and a small pyruvoyl-containing alpha subunit. Requires pyruvate as cofactor. In terms of processing, is synthesized initially as an inactive proenzyme. Formation of the active enzyme involves a self-maturation process in which the active site pyruvoyl group is generated from an internal serine residue via an autocatalytic post-translational modification. Two non-identical subunits are generated from the proenzyme in this reaction, and the pyruvate is formed at the N-terminus of the alpha chain, which is derived from the carboxyl end of the proenzyme. The post-translation cleavage follows an unusual pathway, termed non-hydrolytic serinolysis, in which the side chain hydroxyl group of the serine supplies its oxygen atom to form the C-terminus of the beta chain, while the remainder of the serine residue undergoes an oxidative deamination to produce ammonia and the pyruvoyl prosthetic group on the alpha chain.

It is found in the cell membrane. It carries out the reaction a 1,2-diacyl-sn-glycero-3-phospho-L-serine + H(+) = a 1,2-diacyl-sn-glycero-3-phosphoethanolamine + CO2. It functions in the pathway phospholipid metabolism; phosphatidylethanolamine biosynthesis; phosphatidylethanolamine from CDP-diacylglycerol: step 2/2. Its function is as follows. Catalyzes the formation of phosphatidylethanolamine (PtdEtn) from phosphatidylserine (PtdSer). The protein is Phosphatidylserine decarboxylase proenzyme of Bacteroides thetaiotaomicron (strain ATCC 29148 / DSM 2079 / JCM 5827 / CCUG 10774 / NCTC 10582 / VPI-5482 / E50).